Consider the following 505-residue polypeptide: RNA-splicing ligase RtcB homolog (505 aa).

Mn(2+)-binding residues include D119, C122, H227, and H259. Residue 226–230 participates in GMP binding; the sequence is NHYAE. The residue at position 300 (S300) is a Phosphoserine. A Mn(2+)-binding site is contributed by H353. Residues 353–354, 402–405, S409, and 428–431 contribute to the GMP site; these read HN, GGTM, and HGAG. Residue H428 is the GMP-histidine intermediate of the active site. Residue K496 forms a Glycyl lysine isopeptide (Lys-Gly) (interchain with G-Cter in SUMO2) linkage. K504 lines the GMP pocket.

Belongs to the RtcB family. As to quaternary structure, catalytic component of the tRNA-splicing ligase complex. The cofactor is Mn(2+).

It is found in the nucleus. It localises to the cytoplasm. It catalyses the reaction a 3'-end 3'-phospho-ribonucleotide-RNA + a 5'-end dephospho-ribonucleoside-RNA + GTP = a ribonucleotidyl-ribonucleotide-RNA + GMP + diphosphate. The enzyme catalyses a 3'-end 2',3'-cyclophospho-ribonucleotide-RNA + a 5'-end dephospho-ribonucleoside-RNA + GTP + H2O = a ribonucleotidyl-ribonucleotide-RNA + GMP + diphosphate + H(+). Protein archease stimulates the activity of the tRNA ligase complex with high efficiency in the presence of GTP. Catalytic subunit of the tRNA-splicing ligase complex that acts by directly joining spliced tRNA halves to mature-sized tRNAs by incorporating the precursor-derived splice junction phosphate into the mature tRNA as a canonical 3',5'-phosphodiester. May act as an RNA ligase with broad substrate specificity, and may function toward other RNAs. In Homo sapiens (Human), this protein is RNA-splicing ligase RtcB homolog.